Reading from the N-terminus, the 141-residue chain is ATP synthase epsilon chain (141 aa).

It belongs to the ATPase epsilon chain family. In terms of assembly, F-type ATPases have 2 components, CF(1) - the catalytic core - and CF(0) - the membrane proton channel. CF(1) has five subunits: alpha(3), beta(3), gamma(1), delta(1), epsilon(1). CF(0) has three main subunits: a, b and c.

The protein localises to the cell inner membrane. In terms of biological role, produces ATP from ADP in the presence of a proton gradient across the membrane. The polypeptide is ATP synthase epsilon chain (Halorhodospira halophila (strain DSM 244 / SL1) (Ectothiorhodospira halophila (strain DSM 244 / SL1))).